The chain runs to 205 residues: DUF724 domain-containing protein 4 (205 aa).

The tract at residues 28-59 is disordered; sequence DASGRGKRRRVEQEHHSDLNNETAAPTGGSAG. The region spanning 63-189 is the DUF724 domain; it reads VLPFTKTLAS…MADDYSKLKK (127 aa).

Expressed in roots, leaves, stems, flowers and siliques.

The protein localises to the nucleus. Functionally, may be involved in the polar growth of plant cells via transportation of RNAs. In Arabidopsis thaliana (Mouse-ear cress), this protein is DUF724 domain-containing protein 4.